The chain runs to 1132 residues: Tyrosine-protein kinase JAK2 (1132 aa).

Residues 1 to 239 (MGMACLTMTE…RYRFRRFIQQ (239 aa)) form an interaction with cytokine/interferon/growth hormone receptors region. The region spanning 37–380 (PVLQVYLYHS…GYYRLTADAH (344 aa)) is the FERM domain. The residue at position 119 (Tyr119) is a Phosphotyrosine; by autocatalysis. A phosphotyrosine mark is found at Tyr372 and Tyr373. The region spanning 401–482 (HGPISMDFAI…SLKDLLNCYQ (82 aa)) is the SH2; atypical domain. A Phosphoserine modification is found at Ser523. The 265-residue stretch at 545 to 809 (LIFNESLGQG…AVIRDLNSLF (265 aa)) folds into the Protein kinase 1 domain. Phosphotyrosine is present on residues Tyr570 and Tyr813. The Protein kinase 2 domain maps to 849 to 1126 (LKFLQQLGKG…RDLSLRVDQI (278 aa)). 855 to 863 (LGKGNFGSV) provides a ligand contact to ATP. Tyr868 bears the Phosphotyrosine; by autocatalysis mark. Lys882 lines the ATP pocket. Phosphotyrosine; by autocatalysis is present on residues Tyr966 and Tyr972. Asp976 serves as the catalytic Proton acceptor. Residues Tyr1007 and Tyr1008 each carry the phosphotyrosine; by autocatalysis modification.

The protein belongs to the protein kinase superfamily. Tyr protein kinase family. JAK subfamily. As to quaternary structure, interacts with IL23R, SKB1 and STAM2. Interacts with EPOR. Interacts with LYN. Interacts with SIRPA. Interacts with SH2B1. Interacts with TEC. Interacts with IFNGR2 (via intracellular domain). Interacts with LEPR (Isoform B). Interacts with HSP90AB1; promotes functional activation in a heat shock-dependent manner. Interacts with STRA6. Interacts with ASB2; the interaction targets JAK2 for Notch-induced proteasomal degradation. It depends on Mg(2+) as a cofactor. Autophosphorylated, leading to regulate its activity. Leptin promotes phosphorylation on tyrosine residues, including phosphorylation on Tyr-813. Autophosphorylation on Tyr-119 in response to EPO down-regulates its kinase activity. Autophosphorylation on Tyr-868, Tyr-966 and Tyr-972 in response to growth hormone (GH) are required for maximal kinase activity. Also phosphorylated by TEC. Phosphorylated on tyrosine residues in response to interferon gamma signaling. Phosphorylated on tyrosine residues in response to a signaling cascade that is activated by increased cellular retinol. In terms of processing, undergoes Notch-induced ubiquitination and subsequent proteasomal degradation which is mediated by ASB1 or ASB2, the substrate-recognition components of probable ECS E3 ubiquitin-protein ligase complexes. In terms of tissue distribution, ubiquitously expressed throughout most tissues.

It localises to the endomembrane system. The protein resides in the cytoplasm. Its subcellular location is the nucleus. It catalyses the reaction L-tyrosyl-[protein] + ATP = O-phospho-L-tyrosyl-[protein] + ADP + H(+). Its activity is regulated as follows. Regulated by autophosphorylation, can both activate or decrease activity. Heme regulates its activity by enhancing the phosphorylation on Tyr-1007 and Tyr-1008. In terms of biological role, non-receptor tyrosine kinase involved in various processes such as cell growth, development, differentiation or histone modifications. Mediates essential signaling events in both innate and adaptive immunity. In the cytoplasm, plays a pivotal role in signal transduction via its association with type I receptors such as growth hormone (GHR), prolactin (PRLR), leptin (LEPR), erythropoietin (EPOR), thrombopoietin (THPO); or type II receptors including IFN-alpha, IFN-beta, IFN-gamma and multiple interleukins. Following ligand-binding to cell surface receptors, phosphorylates specific tyrosine residues on the cytoplasmic tails of the receptor, creating docking sites for STATs proteins. Subsequently, phosphorylates the STATs proteins once they are recruited to the receptor. Phosphorylated STATs then form homodimer or heterodimers and translocate to the nucleus to activate gene transcription. For example, cell stimulation with erythropoietin (EPO) during erythropoiesis leads to JAK2 autophosphorylation, activation, and its association with erythropoietin receptor (EPOR) that becomes phosphorylated in its cytoplasmic domain. Then, STAT5 (STAT5A or STAT5B) is recruited, phosphorylated and activated by JAK2. Once activated, dimerized STAT5 translocates into the nucleus and promotes the transcription of several essential genes involved in the modulation of erythropoiesis. Part of a signaling cascade that is activated by increased cellular retinol and that leads to the activation of STAT5 (STAT5A or STAT5B). In addition, JAK2 mediates angiotensin-2-induced ARHGEF1 phosphorylation. Plays a role in cell cycle by phosphorylating CDKN1B. Cooperates with TEC through reciprocal phosphorylation to mediate cytokine-driven activation of FOS transcription. In the nucleus, plays a key role in chromatin by specifically mediating phosphorylation of 'Tyr-41' of histone H3 (H3Y41ph), a specific tag that promotes exclusion of CBX5 (HP1 alpha) from chromatin. Up-regulates the potassium voltage-gated channel activity of KCNA3. This Rattus norvegicus (Rat) protein is Tyrosine-protein kinase JAK2.